A 327-amino-acid chain; its full sequence is Serine/threonine-protein phosphatase PP1-1 (327 aa).

Mn(2+)-binding residues include D63, H65, D91, and N123. The active-site Proton donor is the H124. The Mn(2+) site is built by H172 and H247. The interval 305-327 (GYQGSSQNWHMTPPRKNKTGNSK) is disordered. T316 carries the phosphothreonine; by CDC2 modification. Residues 317–327 (PPRKNKTGNSK) are compositionally biased toward basic residues.

The protein belongs to the PPP phosphatase family. PP-1 subfamily. In terms of assembly, oligomer. The cofactor is Mn(2+).

Its subcellular location is the nucleus. The enzyme catalyses O-phospho-L-seryl-[protein] + H2O = L-seryl-[protein] + phosphate. It catalyses the reaction O-phospho-L-threonyl-[protein] + H2O = L-threonyl-[protein] + phosphate. Essential role in cell cycle control. PP1 is perhaps required for exit from mitosis. The polypeptide is Serine/threonine-protein phosphatase PP1-1 (dis2) (Schizosaccharomyces pombe (strain 972 / ATCC 24843) (Fission yeast)).